The primary structure comprises 427 residues: MAQKIQAIRGMNDYLPADTRVWQKIENTLKQILAGYGFSEIRTPIVEHTPLFQRAIGEVTDVVEKEMYTFTDRGEDAQSLTLRPENTAGCVRAGIEHGLLYNQEQRLWYLGPMFRYERPQKGRYRQFHQLGAEVFGLQGPDIDAELIMLTARWWKALGIAEHVTLELNSIGSLEARAKYREALVAFLEQHVDQLDEDCKRRMYSNPLRVLDSKNPEIQTLLNDAPELFDYLDDESREHFDGLCALLDAVGITYRVNQRLVRGLDYYNRTVFEWVTSALGSQGTVCAGGRYDGLVKQLGGHPTPAVGFAMGMERMILLVQAVNPEFVADTHVADVYLASFGDNSQSAALMLAEEIRDQLPTLRLMTNHGKGNFKKQLGRADKHGAKIALILGEDEINAGTVAVKDLRSGEQTIVSRSELAQQLTLLLG.

The protein belongs to the class-II aminoacyl-tRNA synthetase family. As to quaternary structure, homodimer.

Its subcellular location is the cytoplasm. It catalyses the reaction tRNA(His) + L-histidine + ATP = L-histidyl-tRNA(His) + AMP + diphosphate + H(+). The chain is Histidine--tRNA ligase from Proteus mirabilis (strain HI4320).